Here is a 621-residue protein sequence, read N- to C-terminus: F-box/LRR-repeat protein 4 (621 aa).

R28 bears the Asymmetric dimethylarginine mark. Positions 277 to 332 (NGYFDKLPYELIQLILNHLSLPDLCRLAQTCRLLHQHCCDPLQYIHLNLQPYWARL) constitute an F-box domain. LRR repeat units lie at residues 376-397 (ELVR…EVIS), 402-421 (NLQD…AFGH), 427-448 (SLKR…SILN), 452-474 (ELQH…ASMI), 480-501 (NLRT…AELA), 504-524 (CVLL…STGC), 532-558 (LPNL…ASNC), 559-583 (TRLQ…LLES), and 584-609 (CKDL…LNAS).

In terms of assembly, part of a SCF (SKP1-CUL1-F-box) protein ligase complex. Interacts with FAF2 and VCP. Interacts with PPTC7; this interaction promotes destruction of BNIP3 and NIX and mitophagy suppression.

Its subcellular location is the cytoplasm. The protein resides in the nucleus. It localises to the mitochondrion outer membrane. Functionally, substrate-recognition component of the mitochondria-localized SCF-FBXL4 ubiquitin E3 ligase complex that plays a role in the restriction of mitophagy by controlling the degradation of BNIP3 and NIX mitophagy receptors. Also rescues mitochondrial injury through reverting hyperactivation of DRP1-mediated mitochondrial fission. The sequence is that of F-box/LRR-repeat protein 4 (Fbxl4) from Mus musculus (Mouse).